The following is a 61-amino-acid chain: Cecropin-D (61 aa).

The signal sequence occupies residues 1–22; the sequence is MKFSKIFVFVFAIVFATASVSA. A propeptide spans 23-24 (removed by a dipeptidylpeptidase); sequence AP. The residue at position 60 (Gln-60) is a Glutamine amide.

This sequence belongs to the cecropin family. In terms of tissue distribution, mainly in fat body. Lower in hemocytes. Not expressed in midguts, malpighian tubules and silk glands.

The protein localises to the secreted. Functionally, cecropins have lytic and antibacterial activity against several Gram-positive and Gram-negative bacteria. The polypeptide is Cecropin-D (CECD) (Bombyx mori (Silk moth)).